We begin with the raw amino-acid sequence, 327 residues long: Tetraacyldisaccharide 4'-kinase (327 aa).

Position 56 to 63 (56 to 63 (FVGGTGKT)) interacts with ATP.

Belongs to the LpxK family.

It carries out the reaction a lipid A disaccharide + ATP = a lipid IVA + ADP + H(+). It functions in the pathway glycolipid biosynthesis; lipid IV(A) biosynthesis; lipid IV(A) from (3R)-3-hydroxytetradecanoyl-[acyl-carrier-protein] and UDP-N-acetyl-alpha-D-glucosamine: step 6/6. Transfers the gamma-phosphate of ATP to the 4'-position of a tetraacyldisaccharide 1-phosphate intermediate (termed DS-1-P) to form tetraacyldisaccharide 1,4'-bis-phosphate (lipid IVA). In Halorhodospira halophila (strain DSM 244 / SL1) (Ectothiorhodospira halophila (strain DSM 244 / SL1)), this protein is Tetraacyldisaccharide 4'-kinase.